Reading from the N-terminus, the 128-residue chain is Holo-[acyl-carrier-protein] synthase (128 aa).

Asp-8 and Glu-60 together coordinate Mg(2+).

It belongs to the P-Pant transferase superfamily. AcpS family. Mg(2+) serves as cofactor.

It is found in the cytoplasm. It carries out the reaction apo-[ACP] + CoA = holo-[ACP] + adenosine 3',5'-bisphosphate + H(+). In terms of biological role, transfers the 4'-phosphopantetheine moiety from coenzyme A to a Ser of acyl-carrier-protein. This chain is Holo-[acyl-carrier-protein] synthase, found in Anaeromyxobacter dehalogenans (strain 2CP-C).